Here is an 86-residue protein sequence, read N- to C-terminus: Small ribosomal subunit protein bS20 (86 aa).

The span at 1–27 shows a compositional bias: basic residues; that stretch reads MANSKSAKKRAIQAEKRRQHNASRRSM. The disordered stretch occupies residues 1–28; it reads MANSKSAKKRAIQAEKRRQHNASRRSMM.

It belongs to the bacterial ribosomal protein bS20 family.

Functionally, binds directly to 16S ribosomal RNA. This chain is Small ribosomal subunit protein bS20, found in Vibrio parahaemolyticus serotype O3:K6 (strain RIMD 2210633).